The chain runs to 240 residues: 7-cyano-7-deazaguanine synthase (240 aa).

Residue 14-24 (FSGGQDSATCL) coordinates ATP. Zn(2+)-binding residues include Cys-202, Cys-217, Cys-220, and Cys-223.

This sequence belongs to the QueC family. It depends on Zn(2+) as a cofactor.

It catalyses the reaction 7-carboxy-7-deazaguanine + NH4(+) + ATP = 7-cyano-7-deazaguanine + ADP + phosphate + H2O + H(+). Its pathway is purine metabolism; 7-cyano-7-deazaguanine biosynthesis. Catalyzes the ATP-dependent conversion of 7-carboxy-7-deazaguanine (CDG) to 7-cyano-7-deazaguanine (preQ(0)). In Rhodopseudomonas palustris (strain BisB18), this protein is 7-cyano-7-deazaguanine synthase.